The chain runs to 198 residues: ATP-dependent Clp protease proteolytic subunit (198 aa).

Ser-101 acts as the Nucleophile in catalysis. The active site involves His-126.

Belongs to the peptidase S14 family. As to quaternary structure, component of the chloroplastic Clp protease core complex.

It is found in the plastid. The protein resides in the chloroplast stroma. It carries out the reaction Hydrolysis of proteins to small peptides in the presence of ATP and magnesium. alpha-casein is the usual test substrate. In the absence of ATP, only oligopeptides shorter than five residues are hydrolyzed (such as succinyl-Leu-Tyr-|-NHMec, and Leu-Tyr-Leu-|-Tyr-Trp, in which cleavage of the -Tyr-|-Leu- and -Tyr-|-Trp bonds also occurs).. Functionally, cleaves peptides in various proteins in a process that requires ATP hydrolysis. Has a chymotrypsin-like activity. Plays a major role in the degradation of misfolded proteins. This is ATP-dependent Clp protease proteolytic subunit from Solanum bulbocastanum (Wild potato).